The primary structure comprises 176 residues: NAD(P)H-quinone oxidoreductase subunit 6, chloroplastic (176 aa).

Helical transmembrane passes span 10-30 (FLLV…VLFT), 32-52 (PIFS…LYIL), 61-81 (AQLL…VMFM), 95-115 (VGDG…ISTI), and 152-172 (FFLP…GAIS).

Belongs to the complex I subunit 6 family. In terms of assembly, NDH is composed of at least 16 different subunits, 5 of which are encoded in the nucleus.

The protein localises to the plastid. The protein resides in the chloroplast thylakoid membrane. It catalyses the reaction a plastoquinone + NADH + (n+1) H(+)(in) = a plastoquinol + NAD(+) + n H(+)(out). It carries out the reaction a plastoquinone + NADPH + (n+1) H(+)(in) = a plastoquinol + NADP(+) + n H(+)(out). In terms of biological role, NDH shuttles electrons from NAD(P)H:plastoquinone, via FMN and iron-sulfur (Fe-S) centers, to quinones in the photosynthetic chain and possibly in a chloroplast respiratory chain. The immediate electron acceptor for the enzyme in this species is believed to be plastoquinone. Couples the redox reaction to proton translocation, and thus conserves the redox energy in a proton gradient. In Aethionema grandiflorum (Persian stone-cress), this protein is NAD(P)H-quinone oxidoreductase subunit 6, chloroplastic (ndhG).